We begin with the raw amino-acid sequence, 504 residues long: Glycerol kinase (504 aa).

Thr-12 serves as a coordination point for ADP. ATP contacts are provided by Thr-12, Thr-13, and Ser-14. Thr-12 serves as a coordination point for sn-glycerol 3-phosphate. Residue Arg-16 coordinates ADP. The sn-glycerol 3-phosphate site is built by Arg-82, Glu-83, Tyr-134, and Asp-246. Positions 82, 83, 134, 246, and 247 each coordinate glycerol. Residues Thr-268 and Gly-312 each contribute to the ADP site. ATP contacts are provided by Thr-268, Gly-312, Gln-316, and Gly-413. Gly-413 and Asn-417 together coordinate ADP.

The protein belongs to the FGGY kinase family.

It catalyses the reaction glycerol + ATP = sn-glycerol 3-phosphate + ADP + H(+). Its pathway is polyol metabolism; glycerol degradation via glycerol kinase pathway; sn-glycerol 3-phosphate from glycerol: step 1/1. With respect to regulation, inhibited by fructose 1,6-bisphosphate (FBP). Functionally, key enzyme in the regulation of glycerol uptake and metabolism. Catalyzes the phosphorylation of glycerol to yield sn-glycerol 3-phosphate. This is Glycerol kinase from Paenarthrobacter aurescens (strain TC1).